The chain runs to 430 residues: Enolase (430 aa).

A (2R)-2-phosphoglycerate-binding site is contributed by Q167. E209 (proton donor) is an active-site residue. Positions 246, 287, and 314 each coordinate Mg(2+). Residues K339, R368, S369, and K390 each coordinate (2R)-2-phosphoglycerate. K339 functions as the Proton acceptor in the catalytic mechanism.

It belongs to the enolase family. The cofactor is Mg(2+).

Its subcellular location is the cytoplasm. It is found in the secreted. The protein resides in the cell surface. The enzyme catalyses (2R)-2-phosphoglycerate = phosphoenolpyruvate + H2O. The protein operates within carbohydrate degradation; glycolysis; pyruvate from D-glyceraldehyde 3-phosphate: step 4/5. Functionally, catalyzes the reversible conversion of 2-phosphoglycerate (2-PG) into phosphoenolpyruvate (PEP). It is essential for the degradation of carbohydrates via glycolysis. This Prochlorococcus marinus (strain MIT 9215) protein is Enolase.